The sequence spans 926 residues: MLRVSRTKLGRLSPSLSRGLHHKAVMALRREDVNAWERRAPLAPRHVKGITNLGYKVLIQPSNRRAIHDKEYVKAGGILQEDISEACLILGVKRPPEEKLMPKKTYAFFSHTIKAQEANMGLLDEILKQEIRLIDYEKMVDHRGIRVVAFGQWAGVAGIINILHGMGLRLLALGHHTPFMHIGMAHNYRNSGQAVQAVRDAGYEISLGLMPKSIGPLTFVFTGTGNVSKGAQEIFNELPCEYVEPHELKEVSQNGDLRKVYGTVLSRHHHLVRKTDGVYDPVEYDKYPERYISRFNTDIAPYTTCLINGIYWEQNTPRLLTRQDAQSLLAPGKSPVAGVEGCPALPHKLVAICDISADTGGSIEFMTECTTIERPFCMYDADQHIIHDSVEGSGILMCSIDNLPAQLPIESTEYFGDMLYPYVEEMILSDATQPLESQNFSPVVRDAVIASNGMLSNKYKYIQKLRENREHAQSLSMGTKKKVLVLGSGYVSEPVLEYLLRDDSIEITVGSDMKNQIEQLGKKYNINPVSLHVGKQEEKLSSLVATQDLVISLLPYVLHPLVAKACIASKVNMITASYITPALKELEKSVEDAGITVIGELGLDPGLDHMLAMETIDKAKEVGATIESYVSYCGGLPAPECSDNPLRYKFSWSPVGVLMNIMQPATYLLNGKVVNAVGGVSFLDSVTPMDYFPGLNLEGYPNRDSTKYAEIYGIPSAHTLLRGTLRYKGYAKALSGFVKLGLINRDAFPALQPDANPLTWKELLCDLVGISSSSKCDVLKEAVFKKLGGDTTQLEALEWLGLLGDEQVPQAESLVDALSKHLAVKLSYGPGEKDMIVMRDSFGIRHPSGHLENKTIDLVVYGDVNGFSAMAKTVGLPTAMAAKMLLDGEIQAKGLMGPFSKEIYGPILERIKAEGIMYTTQSTIKL.

The N-terminal 27 residues, Met-1–Ala-27, are a transit peptide targeting the mitochondrion. A lysine-ketoglutarate reductase region spans residues Leu-28–Leu-455. 2 positions are modified to N6-acetyllysine: Lys-48 and Lys-56. Residue Lys-93 is modified to N6-acetyllysine; alternate. Lys-93 bears the N6-succinyllysine; alternate mark. Position 128 is an N6-acetyllysine (Lys-128). Lys-138 bears the N6-acetyllysine; alternate mark. Lys-138 is subject to N6-succinyllysine; alternate. N6-succinyllysine is present on Lys-274. Lys-286 carries the post-translational modification N6-acetyllysine; alternate. Lys-286 bears the N6-succinyllysine; alternate mark. N6-succinyllysine is present on Lys-333. Lys-458 carries the N6-acetyllysine; alternate modification. Position 458 is an N6-succinyllysine; alternate (Lys-458). The saccharopine dehydrogenase stretch occupies residues Met-477 to Leu-926. Residues Ser-488, Asp-512, and Gln-516 each coordinate NAD(+). N6-acetyllysine; alternate is present on residues Lys-523 and Lys-535. 2 positions are modified to N6-succinyllysine; alternate: Lys-523 and Lys-535. Residues Leu-554, Ala-576, and Ser-577 each coordinate NAD(+). Ser-577–Tyr-578 contacts L-saccharopine. N6-acetyllysine; alternate is present on Lys-584. The residue at position 584 (Lys-584) is an N6-succinyllysine; alternate. 3 residues coordinate NAD(+): Leu-603, Asp-604, and Pro-605. Residue Asp-604 participates in L-saccharopine binding. L-saccharopine is bound at residue Arg-703. Residue Lys-707 is modified to N6-acetyllysine. Thr-724–Arg-726 lines the L-saccharopine pocket. Lys-732 carries the N6-succinyllysine modification. Lys-739 carries the post-translational modification N6-acetyllysine. Lys-761 is modified (N6-acetyllysine; alternate). The residue at position 761 (Lys-761) is an N6-succinyllysine; alternate. An N6-acetyllysine modification is found at Lys-780.

This sequence in the N-terminal section; belongs to the AlaDH/PNT family. In the C-terminal section; belongs to the saccharopine dehydrogenase family. In terms of assembly, homotetramer.

It localises to the mitochondrion. It catalyses the reaction L-saccharopine + NADP(+) + H2O = L-lysine + 2-oxoglutarate + NADPH + H(+). The catalysed reaction is L-saccharopine + NAD(+) + H2O = (S)-2-amino-6-oxohexanoate + L-glutamate + NADH + H(+). Its pathway is amino-acid degradation; L-lysine degradation via saccharopine pathway; glutaryl-CoA from L-lysine: step 1/6. It functions in the pathway amino-acid degradation; L-lysine degradation via saccharopine pathway; glutaryl-CoA from L-lysine: step 2/6. In terms of biological role, bifunctional enzyme that catalyzes the first two steps in lysine degradation. The chain is Alpha-aminoadipic semialdehyde synthase, mitochondrial from Bos taurus (Bovine).